Consider the following 459-residue polypeptide: FAD-dependent monooxygenase CTB5 (459 aa).

An FAD-binding PCMH-type domain is found at 10–187; the sequence is SDLHPSCIAL…TAVTLKAFEQ (178 aa).

It belongs to the oxygen-dependent FAD-linked oxidoreductase family.

It functions in the pathway mycotoxin biosynthesis. FAD-dependent monooxygenase; part of the gene cluster that mediates the biosynthesis of cercosporin, a light-activated, non-host-selective toxin. The perylenequinone chromophore of cercosporin absorbs light energy to attain an electronically-activated triplet state and produces active oxygen species such as the hydroxyl radical, superoxide, hydrogen peroxide or singlet oxygen upon reaction with oxygen molecules. These reactive oxygen species cause damage to various cellular components including lipids, proteins and nucleic acids. The first step of cercosporin biosynthesis is performed by the polyketide synthase CTB1 which catalyzes the formation of nor-toralactone. The starter unit acyltransferase (SAT) domain of CTB1 initiates polyketide extension by the selective utilization of acetyl-CoA, which is elongated to the heptaketide in the beta-ketoacyl synthase (KS) domain by successive condensations with six malonyl units introduced by the malonyl acyltransferase (MAT) domain. The product template (PT) domain catalyzes C4-C9 and C2-C11 aldol cyclizations and dehydrations to a trihydroxynaphthalene, which is thought to be delivered to the thioesterase (TE) domain for product release. The bifunctional enzyme CTB3 then methylates nor-toralactone to toralactone before conducting an unusual oxidative aromatic ring opening. The O-methyltransferase CTB2 further methylates the nascent OH-6 of the CBT3 product, blocking further oxidation at this site before the reductase CTB6 reduces the 2-oxopropyl ketone at position C7, giving naphthalene. The FAD-dependent monooxygenase CTB5 in concert with the multicopper oxidase CTB12 are responsible for homodimerization of naphthalene with CTB7 installing the dioxepine moiety, finally producing cercosporin. The fasciclin domain-containing protein CTB11 might act with CTB5 and CTB12 whereas the roles of CTB9 and CTB10 have still to be elucidated. This Cercospora nicotianae (Barn spot disease fungus) protein is FAD-dependent monooxygenase CTB5.